Here is a 299-residue protein sequence, read N- to C-terminus: ATP phosphoribosyltransferase (299 aa).

Belongs to the ATP phosphoribosyltransferase family. Long subfamily. As to quaternary structure, equilibrium between an active dimeric form, an inactive hexameric form and higher aggregates. Interconversion between the various forms is largely reversible and is influenced by the natural substrates and inhibitors of the enzyme. It depends on Mg(2+) as a cofactor.

The protein localises to the cytoplasm. It carries out the reaction 1-(5-phospho-beta-D-ribosyl)-ATP + diphosphate = 5-phospho-alpha-D-ribose 1-diphosphate + ATP. It functions in the pathway amino-acid biosynthesis; L-histidine biosynthesis; L-histidine from 5-phospho-alpha-D-ribose 1-diphosphate: step 1/9. Its activity is regulated as follows. Feedback inhibited by histidine. In terms of biological role, catalyzes the condensation of ATP and 5-phosphoribose 1-diphosphate to form N'-(5'-phosphoribosyl)-ATP (PR-ATP). Has a crucial role in the pathway because the rate of histidine biosynthesis seems to be controlled primarily by regulation of HisG enzymatic activity. This Buchnera aphidicola subsp. Baizongia pistaciae (strain Bp) protein is ATP phosphoribosyltransferase.